We begin with the raw amino-acid sequence, 162 residues long: PSMTDQQAEARAFLSEEMIAEFKAAFDMFDADGGGDISTKELGTVMRMLGQNPTKEELDAIIEEVDEDGSGTIDFEEFLVMMVRQMKEDAKGKSEEELANCFRIFDKNADGFIDIEELGEILRATGEHVTEEEIEDLMKDSDKNNDGRIDFDEFLKMMEGVQ.

EF-hand domains follow at residues 17 to 52 (EMIA…LGQN), 53 to 88 (PTKE…QMKE), 93 to 128 (KSEE…TGEH), and 129 to 162 (VTEE…EGVQ). Asp-30, Asp-32, Asp-36, Glu-41, Asp-66, Asp-68, Ser-70, Thr-72, Glu-77, Asp-106, Asn-108, Asp-110, Glu-117, Asp-142, Asn-144, Asp-146, Arg-148, and Glu-153 together coordinate Ca(2+).

It belongs to the troponin C family.

Troponin is the central regulatory protein of striated muscle contraction. Tn consists of three components: Tn-I which is the inhibitor of actomyosin ATPase, Tn-T which contains the binding site for tropomyosin and Tn-C. The binding of calcium to Tn-C abolishes the inhibitory action of Tn on actin filaments. The sequence is that of Troponin C, skeletal muscle (TNNC2) from Meleagris gallopavo (Wild turkey).